The chain runs to 376 residues: Queuine tRNA-ribosyltransferase (376 aa).

The Proton acceptor role is filled by D90. Substrate contacts are provided by residues 90 to 94, D144, Q193, and G220; that span reads DSGGF. The tract at residues 251-257 is RNA binding; that stretch reads GVGTPED. The active-site Nucleophile is D270. The segment at 275–279 is RNA binding; important for wobble base 34 recognition; it reads TRNAR. Residues C308, C310, C313, and H339 each contribute to the Zn(2+) site.

The protein belongs to the queuine tRNA-ribosyltransferase family. Homodimer. Within each dimer, one monomer is responsible for RNA recognition and catalysis, while the other monomer binds to the replacement base PreQ1. It depends on Zn(2+) as a cofactor.

It catalyses the reaction 7-aminomethyl-7-carbaguanine + guanosine(34) in tRNA = 7-aminomethyl-7-carbaguanosine(34) in tRNA + guanine. Its pathway is tRNA modification; tRNA-queuosine biosynthesis. In terms of biological role, catalyzes the base-exchange of a guanine (G) residue with the queuine precursor 7-aminomethyl-7-deazaguanine (PreQ1) at position 34 (anticodon wobble position) in tRNAs with GU(N) anticodons (tRNA-Asp, -Asn, -His and -Tyr). Catalysis occurs through a double-displacement mechanism. The nucleophile active site attacks the C1' of nucleotide 34 to detach the guanine base from the RNA, forming a covalent enzyme-RNA intermediate. The proton acceptor active site deprotonates the incoming PreQ1, allowing a nucleophilic attack on the C1' of the ribose to form the product. After dissociation, two additional enzymatic reactions on the tRNA convert PreQ1 to queuine (Q), resulting in the hypermodified nucleoside queuosine (7-(((4,5-cis-dihydroxy-2-cyclopenten-1-yl)amino)methyl)-7-deazaguanosine). In Cupriavidus necator (strain ATCC 17699 / DSM 428 / KCTC 22496 / NCIMB 10442 / H16 / Stanier 337) (Ralstonia eutropha), this protein is Queuine tRNA-ribosyltransferase.